Consider the following 809-residue polypeptide: Penicillin-binding protein 1A (809 aa).

Residues 1–34 (MSDNTKTNSRNKSVKRTKKVKKKKKFGFFKKLFT) are Cytoplasmic-facing. The helical; Signal-anchor for type II membrane protein transmembrane segment at 35-55 (ILFCLFILLSVAASGVIFAIV) threads the bilayer. Residues 56 to 809 (KTSPNLDING…PNNNTTNTNK (754 aa)) lie on the Extracellular side of the membrane. The transglycosylase stretch occupies residues 74 to 251 (SQLYDDNNNP…PSAYYPFSQN (178 aa)). Residue glutamate 113 is the Proton donor; for transglycosylase activity of the active site. A transpeptidase region spans residues 381–664 (AAATLFDYHT…VAEIWGEIMK (284 aa)). The Acyl-ester intermediate; for transpeptidase activity role is filled by serine 422. The interval 694–809 (SPSNLSGDDS…PNNNTTNTNK (116 aa)) is disordered.

In the N-terminal section; belongs to the glycosyltransferase 51 family. It in the C-terminal section; belongs to the transpeptidase family.

The protein resides in the cell membrane. The enzyme catalyses [GlcNAc-(1-&gt;4)-Mur2Ac(oyl-L-Ala-gamma-D-Glu-L-Lys-D-Ala-D-Ala)](n)-di-trans,octa-cis-undecaprenyl diphosphate + beta-D-GlcNAc-(1-&gt;4)-Mur2Ac(oyl-L-Ala-gamma-D-Glu-L-Lys-D-Ala-D-Ala)-di-trans,octa-cis-undecaprenyl diphosphate = [GlcNAc-(1-&gt;4)-Mur2Ac(oyl-L-Ala-gamma-D-Glu-L-Lys-D-Ala-D-Ala)](n+1)-di-trans,octa-cis-undecaprenyl diphosphate + di-trans,octa-cis-undecaprenyl diphosphate + H(+). It catalyses the reaction Preferential cleavage: (Ac)2-L-Lys-D-Ala-|-D-Ala. Also transpeptidation of peptidyl-alanyl moieties that are N-acyl substituents of D-alanine.. It functions in the pathway cell wall biogenesis; peptidoglycan biosynthesis. Cell wall formation. Synthesis of cross-linked peptidoglycan from the lipid intermediates. The enzyme has a penicillin-insensitive transglycosylase N-terminal domain (formation of linear glycan strands) and a penicillin-sensitive transpeptidase C-terminal domain (cross-linking of the peptide subunits). This Clostridium acetobutylicum (strain ATCC 824 / DSM 792 / JCM 1419 / IAM 19013 / LMG 5710 / NBRC 13948 / NRRL B-527 / VKM B-1787 / 2291 / W) protein is Penicillin-binding protein 1A (pbpA).